A 682-amino-acid polypeptide reads, in one-letter code: Protein SPT2 homolog (682 aa).

The important for interaction with DNA stretch occupies residues 1 to 569 (MDFREILLIA…PLLSGYRSAQ (569 aa)). Residue Lys-37 forms a Glycyl lysine isopeptide (Lys-Gly) (interchain with G-Cter in SUMO2) linkage. Residues 46-82 (AFLRRKEEELRQKALEEKKRKEELVKKRIELKHDKKA) adopt a coiled-coil conformation. The segment at 80-170 (KKARAMAKRT…SAPSPMNFTD (91 aa)) is disordered. Positions 101-111 (VEEKTKKKQLV) are enriched in basic and acidic residues. Acidic residues predominate over residues 121-131 (QEYDVEEEDFI). A compositionally biased stretch (low complexity) spans 156–165 (KAPLKSAPSP). Residue Lys-186 forms a Glycyl lysine isopeptide (Lys-Gly) (interchain with G-Cter in SUMO2) linkage. Basic and acidic residues predominate over residues 187 to 208 (VVKKAEDRPLTAEELREREFLE). 2 disordered regions span residues 187–533 (VVKK…TKPR) and 549–595 (RSSN…DEYD). 5 stretches are compositionally biased toward polar residues: residues 267–280 (STAS…SSPK), 317–334 (STCS…TQKS), 371–393 (PGSN…TLSS), 400–409 (QNGSSSSGPE), and 419–432 (ASNS…LNGT). Ser-277 is subject to Phosphoserine. 2 stretches are compositionally biased toward low complexity: residues 435-460 (PGRP…RPVG) and 490-504 (SGPG…PAGR). The important for interaction with histones stretch occupies residues 570–682 (GPQRLPFPTG…RRKAKKLKRH (113 aa)). The residue at position 581 (Lys-581) is an N6-acetyllysine. Positions 586-595 (YEEDDDDEYD) are enriched in acidic residues. Ser-596 is subject to Phosphoserine. Basic and acidic residues-rich tracts occupy residues 641-652 (SWKEQQKEEAKS) and 663-672 (EMRREEEELK). Residues 641 to 682 (SWKEQQKEEAKSLRLGMQEDLEEMRREEEELKRRKAKKLKRH) form a disordered region. Residues 642–682 (WKEQQKEEAKSLRLGMQEDLEEMRREEEELKRRKAKKLKRH) are a coiled coil. Residues 673 to 682 (RRKAKKLKRH) are compositionally biased toward basic residues.

Belongs to the SPT2 family. Interacts with histones. Interacts with a heterotetrameric complex formed by histone H3 and H4, especially when the histone tetramer is not bound to DNA. Interacts with histone H3.3.

It localises to the nucleus. Its subcellular location is the nucleolus. In terms of biological role, histone chaperone that stabilizes pre-existing histone tetramers and regulates replication-independent histone exchange on chromatin. Required for normal chromatin refolding in the coding region of transcribed genes, and for the suppression of spurious transcription. Binds DNA and histones and promotes nucleosome assembly (in vitro). Facilitates formation of tetrameric histone complexes containing histone H3 and H4. Modulates RNA polymerase 1-mediated transcription. Binds DNA, with a preference for branched DNA species, such as Y-form DNA and Holliday junction DNA. The sequence is that of Protein SPT2 homolog (Spty2d1) from Mus musculus (Mouse).